Here is a 169-residue protein sequence, read N- to C-terminus: NAD(P)H-quinone oxidoreductase subunit J, chloroplastic (169 aa).

This sequence belongs to the complex I 30 kDa subunit family. NDH is composed of at least 16 different subunits, 5 of which are encoded in the nucleus.

The protein localises to the plastid. The protein resides in the chloroplast thylakoid membrane. It catalyses the reaction a plastoquinone + NADH + (n+1) H(+)(in) = a plastoquinol + NAD(+) + n H(+)(out). The catalysed reaction is a plastoquinone + NADPH + (n+1) H(+)(in) = a plastoquinol + NADP(+) + n H(+)(out). In terms of biological role, NDH shuttles electrons from NAD(P)H:plastoquinone, via FMN and iron-sulfur (Fe-S) centers, to quinones in the photosynthetic chain and possibly in a chloroplast respiratory chain. The immediate electron acceptor for the enzyme in this species is believed to be plastoquinone. Couples the redox reaction to proton translocation, and thus conserves the redox energy in a proton gradient. This is NAD(P)H-quinone oxidoreductase subunit J, chloroplastic from Zygnema circumcarinatum (Green alga).